The sequence spans 1096 residues: Pullulanase (1096 aa).

Positions 1–19 are cleaved as a signal peptide; it reads MLRYTCHALFLGSLVLLSG. Cysteine 20 carries the N-palmitoyl cysteine lipid modification. Residue cysteine 20 is the site of S-diacylglycerol cysteine attachment. Over residues 24 to 34 the composition is skewed to low complexity; sequence SSSSTSGSPGS. Residues 24–50 form a disordered region; that stretch reads SSSSTSGSPGSPGNPGNPGTPGTPDPQ. The Nucleophile role is filled by aspartate 694. The active-site Proton donor is the glutamate 723. Positions 1014-1044 are disordered; that stretch reads QAGRQSGQPCRRHRGGDQRRAGKPDAAGLRR.

This sequence belongs to the glycosyl hydrolase 13 family. Homotrimer.

Its subcellular location is the cell membrane. It catalyses the reaction Hydrolysis of (1-&gt;6)-alpha-D-glucosidic linkages in pullulan, amylopectin and glycogen, and in the alpha- and beta-limit dextrins of amylopectin and glycogen.. In Klebsiella aerogenes (Enterobacter aerogenes), this protein is Pullulanase (pulA).